A 225-amino-acid chain; its full sequence is Membrane-spanning 4-domains subfamily A member 4D (225 aa).

Residues 1-42 (MQGLAQTTMAVVPGGAPPSENSVIKSQMWNKNKEKFLKGEPK) are Cytoplasmic-facing. Residues 43–63 (VLGAIQVMIAFINFSLGIIII) traverse the membrane as a helical segment. The Extracellular segment spans residues 64–73 (LNRVSERFMS). A helical transmembrane segment spans residues 74–94 (VLLLAPFWGSIMFIFSGSLSI). Residues 95 to 113 (AAGVKPTKAMIISSLSVNT) lie on the Cytoplasmic side of the membrane. Residues 114-134 (ISSVLAVAASIIGVISVISGV) form a helical membrane-spanning segment. Topologically, residues 135 to 148 (FRQFRSQPAIASLD) are extracellular. A helical membrane pass occupies residues 149–169 (VLMTILNMLEFCIAVSVSAFG). Topologically, residues 170 to 225 (CKASCCNSSEVLVVLPSNSAVTVTAPPMILQPLPPSECQGKNVPENLYRNQPGEIV) are cytoplasmic.

Belongs to the MS4A family. In terms of tissue distribution, expressed in thymus, spleen, peripheral lymph node, liver, kidney, heart, colon, lung, and testes.

The protein resides in the membrane. Its function is as follows. May be involved in signal transduction as a component of a multimeric receptor complex. This Mus musculus (Mouse) protein is Membrane-spanning 4-domains subfamily A member 4D (Ms4a4d).